A 76-amino-acid chain; its full sequence is RSWFSFLGEAYDGARDMWRAYSDMKEANYKNSDKYFHARGNYDAAQRGPGGVWAAEVISDARENIQKLLGHGAEDT.

Belongs to the SAA family. In terms of tissue distribution, expressed by the liver; secreted in plasma.

Its subcellular location is the secreted. In terms of biological role, major acute phase reactant. Apolipoprotein of the HDL complex. This chain is Amyloid protein A (SAA1), found in Macaca mulatta (Rhesus macaque).